The sequence spans 173 residues: MKSKVIVDELTMKRAITRITYEIIERNKQLDNVVLVGIKTRGVYLARRIQERLEQLESLHLAVGELDTKPFRDDMRVEEDTTSMPVDITGKDIILVDDVLYTGRTIRAAIDNLVSLGRPGRVSLAVLVDRGHRELPIRADYVGKNIPTSKTEEIVVEVVEVDGQDRISIVDPE.

The short motif at Ile-93–Thr-105 is the PRPP-binding element.

This sequence belongs to the purine/pyrimidine phosphoribosyltransferase family. PyrR subfamily. In terms of assembly, homodimer and homohexamer; in equilibrium.

The enzyme catalyses UMP + diphosphate = 5-phospho-alpha-D-ribose 1-diphosphate + uracil. In terms of biological role, regulates transcriptional attenuation of the pyrimidine nucleotide (pyr) operon by binding in a uridine-dependent manner to specific sites on pyr mRNA. This disrupts an antiterminator hairpin in the RNA and favors formation of a downstream transcription terminator, leading to a reduced expression of downstream genes. Functionally, also displays a weak uracil phosphoribosyltransferase activity which is not physiologically significant. The protein is Bifunctional protein PyrR of Streptococcus equi subsp. zooepidemicus (strain MGCS10565).